The primary structure comprises 346 residues: Dehydrogenase orf1 (346 aa).

43 to 48 (VDYATQ) contacts NADP(+). 133 to 140 (LAFSTAIV) is a substrate binding site. Residues 170–173 (ATSV), 193–196 (SPHN), Y211, and 251–252 (LN) each bind NADP(+). 269-273 (APPNV) contacts substrate. 336–337 (VS) is an NADP(+) binding site.

The protein belongs to the zinc-containing alcohol dehydrogenase family.

It participates in secondary metabolite biosynthesis. In terms of biological role, dehydrogenase; part of the gene cluster that mediates the biosynthesis of nigerpyrone and its derivatives carbonarone A and pestalamide A. The biosynthesis pathway begins with the polyketide assembly by epaA to form phenylacetyl triketide precursor from successive condensation of two malonyl-CoA, presumably with one phenylacetyl-CoA starter unit produced by the phenylacetyl-CoA ligase epaB. For the nigerpyrone biosynthesis, the reactive polyketide chain is released as an aldehyde through the R-domain. A nonenzymatic cyclization and dehydration may create nigerpyrone. For the biosynthesis of carbonarone A and pestalamide A, an extra methyl group is added through the C-methyltransferase domain. Several further steps involving the dehydrogenase orf1, the cytochrome P450 monooxygenase orf2 and the FAD-dependent monooxygenase orf3 are required to form a carbonarone A precursor which is converted to carbonarone A via cyclization. The O-acetyltransferase epaC could catalyze the transfer of 2-methylsuccinyl-CoA, a common intermediate in the ethylmalonyl-CoA pathway, to generate the final product pestalamide A. This chain is Dehydrogenase orf1, found in Aspergillus niger (strain ATCC MYA-4892 / CBS 513.88 / FGSC A1513).